The sequence spans 102 residues: Large ribosomal subunit protein uL24 (102 aa).

It belongs to the universal ribosomal protein uL24 family. In terms of assembly, part of the 50S ribosomal subunit.

In terms of biological role, one of two assembly initiator proteins, it binds directly to the 5'-end of the 23S rRNA, where it nucleates assembly of the 50S subunit. One of the proteins that surrounds the polypeptide exit tunnel on the outside of the subunit. The polypeptide is Large ribosomal subunit protein uL24 (Agrobacterium fabrum (strain C58 / ATCC 33970) (Agrobacterium tumefaciens (strain C58))).